We begin with the raw amino-acid sequence, 153 residues long: Superoxide dismutase [Cu-Zn] (153 aa).

Cu cation-binding residues include His-46, His-48, and His-63. An intrachain disulfide couples Cys-57 to Cys-146. Residues 61–80 (GPHFNPFGKEHGAPEDENRH) form a disordered region. 4 residues coordinate Zn(2+): His-63, His-71, His-80, and Asp-83. The span at 68-80 (GKEHGAPEDENRH) shows a compositional bias: basic and acidic residues. His-120 contacts Cu cation. The span at 124–136 (DDLGRSEHPESKK) shows a compositional bias: basic and acidic residues. The segment at 124–143 (DDLGRSEHPESKKTGNAGAR) is disordered. Residue Arg-143 participates in substrate binding.

The protein belongs to the Cu-Zn superoxide dismutase family. In terms of assembly, homodimer. Requires Cu cation as cofactor. The cofactor is Zn(2+).

Its subcellular location is the cytoplasm. The enzyme catalyses 2 superoxide + 2 H(+) = H2O2 + O2. Functionally, destroys radicals which are normally produced within the cells and which are toxic to biological systems. The protein is Superoxide dismutase [Cu-Zn] (sodC) of Aspergillus flavus.